The following is a 138-amino-acid chain: Venom allergen 2 (138 aa).

Positions 1 to 19 (MKSFVLATCLLGFAQIIYA) are cleaved as a signal peptide. Intrachain disulfides connect cysteine 34/cysteine 57, cysteine 81/cysteine 94, and cysteine 101/cysteine 122.

This sequence belongs to the ant venom allergen 2/4 family. Homodimer; disulfide-linked. Expressed by the venom gland.

It is found in the secreted. The sequence is that of Venom allergen 2 from Solenopsis invicta (Red imported fire ant).